The chain runs to 506 residues: ATP synthase subunit alpha, mitochondrial (506 aa).

171–178 is a binding site for ATP; it reads GDRQTGKT.

It belongs to the ATPase alpha/beta chains family. In terms of assembly, F-type ATPases have 2 components, CF(1) - the catalytic core - and CF(0) - the membrane proton channel. CF(1) has five subunits: alpha(3), beta(3), gamma(1), delta(1), epsilon(1). CF(0) has three main subunits: a, b and c.

The protein localises to the mitochondrion. It localises to the mitochondrion inner membrane. Its function is as follows. Mitochondrial membrane ATP synthase (F(1)F(0) ATP synthase or Complex V) produces ATP from ADP in the presence of a proton gradient across the membrane which is generated by electron transport complexes of the respiratory chain. F-type ATPases consist of two structural domains, F(1) - containing the extramembraneous catalytic core, and F(0) - containing the membrane proton channel, linked together by a central stalk and a peripheral stalk. During catalysis, ATP synthesis in the catalytic domain of F(1) is coupled via a rotary mechanism of the central stalk subunits to proton translocation. Subunits alpha and beta form the catalytic core in F(1). Rotation of the central stalk against the surrounding alpha(3)beta(3) subunits leads to hydrolysis of ATP in three separate catalytic sites on the beta subunits. Subunit alpha does not bear the catalytic high-affinity ATP-binding sites. The polypeptide is ATP synthase subunit alpha, mitochondrial (ATPA) (Beta vulgaris (Sugar beet)).